A 129-amino-acid chain; its full sequence is UPF0325 protein Ent638_0703 (129 aa).

This sequence belongs to the UPF0325 family.

The chain is UPF0325 protein Ent638_0703 from Enterobacter sp. (strain 638).